The primary structure comprises 109 residues: MAQIDNYDLFFSKMISDNITSKLFMKLTITIIITLVIIFIIFTLIILYFIKNKKQDHCINCKVENLDSSIKIDKNNTQKDYPSNFGFVEFPSELLGYNPKKFDNYAYIH.

A helical membrane pass occupies residues 29–49; that stretch reads ITIIITLVIIFIIFTLIILYF.

It localises to the membrane. This is an uncharacterized protein from Sputnik virophage.